An 863-amino-acid polypeptide reads, in one-letter code: Glycogen phosphorylase (863 aa).

Position 618 is an N6-(pyridoxal phosphate)lysine (Lys618).

This sequence belongs to the glycogen phosphorylase family. Pyridoxal 5'-phosphate is required as a cofactor.

It carries out the reaction [(1-&gt;4)-alpha-D-glucosyl](n) + phosphate = [(1-&gt;4)-alpha-D-glucosyl](n-1) + alpha-D-glucose 1-phosphate. Functionally, phosphorylase is an important allosteric enzyme in carbohydrate metabolism. Enzymes from different sources differ in their regulatory mechanisms and in their natural substrates. However, all known phosphorylases share catalytic and structural properties. In Mycobacterium tuberculosis (strain ATCC 25618 / H37Rv), this protein is Glycogen phosphorylase (glgP).